A 520-amino-acid polypeptide reads, in one-letter code: Keratin, type II cytoskeletal 4 (520 aa).

The head stretch occupies residues 1–136 (MIARQQCVRG…DPEIQKVRTE (136 aa)). Residue arginine 13 is modified to Omega-N-methylarginine. The coil 1A stretch occupies residues 137–172 (EREQIKLLNNKFASFIDKVQFLEQQNKVLETKWNLL). An IF rod domain is found at 137 to 450 (EREQIKLLNN…KLLEGEEYRM (314 aa)). The tract at residues 173 to 191 (QQQTTTTSSKNLEPLFETY) is linker 1. The interval 192-284 (LSVLRKQLDT…LYDAELSQMQ (93 aa)) is coil 1B. The interval 285–307 (THVSDTSVVLSMDNNRNLDLDSI) is linker 12. The segment at 308 to 447 (IAEVRAQYEE…TYRKLLEGEE (140 aa)) is coil 2. The segment at 448-520 (YRMSGECQSA…ISTTTLNKRR (73 aa)) is tail. The tract at residues 500-520 (GSVSGSSSSKIISTTTLNKRR) is disordered. Positions 503-514 (SGSSSSKIISTT) are enriched in low complexity.

It belongs to the intermediate filament family. Heterotetramer of two type I and two type II keratins. Keratin-4 is generally associated with keratin-13. In terms of tissue distribution, detected in the suprabasal layer of the stratified epithelium of the esophagus, exocervix, vagina, mouth and lingual mucosa, and in cells and cell clusters in the mucosa and serous gland ducts of the esophageal submucosa (at protein level). Expressed widely in the exocervix and esophageal epithelium, with lowest levels detected in the basal cell layer.

The polypeptide is Keratin, type II cytoskeletal 4 (KRT4) (Homo sapiens (Human)).